The chain runs to 479 residues: Anaerobic nitric oxide reductase flavorubredoxin (479 aa).

Residues 30–210 (LRGSSYNSYL…PFSRLVTPKI (181 aa)) form a zinc metallo-hydrolase region. Fe cation contacts are provided by histidine 79, glutamate 81, aspartate 83, histidine 147, aspartate 166, and histidine 227. The 140-residue stretch at 254-393 (ITIVYDTMSN…LCREHGREIA (140 aa)) folds into the Flavodoxin-like domain. Residues 260-264 (TMSNN) and 342-369 (AFGS…EMSL) each bind FMN. Residues 423-474 (GPRMQCSVCQWIYDPAKGEPMQDVAPGTPWSEVPDNFLCPECSLGKDVFDEL) form the Rubredoxin-like domain. Residues cysteine 428, cysteine 431, cysteine 461, and cysteine 464 each coordinate Fe cation.

It in the N-terminal section; belongs to the zinc metallo-hydrolase group 3 family. In terms of assembly, homotetramer. The cofactor is Fe cation. FMN is required as a cofactor.

The protein resides in the cytoplasm. Its pathway is nitrogen metabolism; nitric oxide reduction. Anaerobic nitric oxide reductase; uses NADH to detoxify nitric oxide (NO), protecting several 4Fe-4S NO-sensitive enzymes. Has at least 2 reductase partners, only one of which (NorW, flavorubredoxin reductase) has been identified. NO probably binds to the di-iron center; electrons enter from the NorW at rubredoxin and are transferred sequentially to the FMN center and the di-iron center. Also able to function as an aerobic oxygen reductase. In Escherichia coli (strain UTI89 / UPEC), this protein is Anaerobic nitric oxide reductase flavorubredoxin.